Reading from the N-terminus, the 730-residue chain is Probable palmitoyltransferase AKR2 (730 aa).

ANK repeat units follow at residues 32–62 (FVVE…DINK), 66–95 (DELP…NVNQ), 100–129 (ERAT…NPTL), 133–166 (QGLN…NVDI), 172–201 (NNRT…TVAL), and 205–234 (RGFN…NFYE). The next 4 helical transmembrane spans lie at 283-303 (LMIF…SLIL), 309-328 (IALS…KFVL), 344-364 (TPFF…IWVK), and 376-396 (AKDA…LKLV). A DHHC domain is found at 429–479 (NFCVETLERKPLRSKYSLFSGALVARFNHYCPWVYNDIGLKNHKLFMFFAF). C459 functions as the S-palmitoyl cysteine intermediate in the catalytic mechanism. The next 2 helical transmembrane spans lie at 473–493 (LFMF…WLCL) and 530–550 (TFFL…MLIV).

The protein belongs to the DHHC palmitoyltransferase family. AKR/ZDHHC17 subfamily.

It is found in the membrane. It carries out the reaction L-cysteinyl-[protein] + hexadecanoyl-CoA = S-hexadecanoyl-L-cysteinyl-[protein] + CoA. The polypeptide is Probable palmitoyltransferase AKR2 (AKR2) (Saccharomyces uvarum (strain ATCC 76518 / CBS 7001 / CLIB 283 / NBRC 10550 / MCYC 623 / NCYC 2669 / NRRL Y-11845) (Yeast)).